We begin with the raw amino-acid sequence, 806 residues long: SH3-containing GRB2-like protein 3-interacting protein 1 (806 aa).

Disordered regions lie at residues 1 to 115 (MMEG…ESHK) and 142 to 278 (SIGN…QAAT). Basic and acidic residues-rich tracts occupy residues 16-32 (RKKE…DRDG) and 40-54 (PPYH…EGGK). Phosphoserine is present on residues Ser-78, Ser-104, Ser-105, Ser-107, Ser-149, Ser-151, Ser-156, and Ser-169. Phosphothreonine is present on residues Thr-180 and Thr-182. Residues Ser-236 and Phe-243 each carry the phosphoserine modification. Pro residues predominate over residues 245–260 (TGTPPPLPPKTVPATP). Phosphothreonine occurs at positions 247 and 259. Residues Ser-265, Asp-274, Ser-287, Ser-289, Ser-300, Ser-316, and Ser-319 each carry the phosphoserine modification. Residues 265–276 (SPLTVATGNDQA) are compositionally biased toward polar residues. Residues 315 to 324 (FSDASPEHVT) are compositionally biased toward basic and acidic residues. The disordered stretch occupies residues 315-533 (FSDASPEHVT…SRGPSPLTMG (219 aa)). A phosphothreonine mark is found at Thr-324, Thr-328, and Thr-335. The segment covering 335–345 (TPPAASDIPAD) has biased composition (low complexity). Ala-338 is subject to Phosphoserine. Over residues 346-369 (SPAPAPPGPTGSAGPPGPPGPRHV) the composition is skewed to pro residues. Residue Ser-371 is modified to Phosphoserine. The span at 377–392 (EVQKKVAEQTFIKDDY) shows a compositional bias: basic and acidic residues. Phosphoserine is present on Ser-398. A Phosphothreonine modification is found at Thr-409. Residues 436 to 453 (TSGASSPARPATPLVPCS) are compositionally biased toward low complexity. Over residues 454–473 (TTPPPPPPRPPSRPKLPPGK) the composition is skewed to pro residues. Composition is skewed to low complexity over residues 480–490 (SRPFSPPIHSS) and 497–520 (PLAR…TTPT). Phosphoserine occurs at positions 484, 505, and 533. Positions 537–805 (TLPVAAAFTE…RFAAGKYLAD (269 aa)) constitute an MHD domain. Interaction with DPF motifs-containing proteins regions lie at residues 539 to 545 (PVAAAFT), 571 to 573 (SFP), 645 to 648 (TYYN), and 791 to 796 (SLIKKR). Residues 627-806 (MPNLMTHLKK…FAAGKYLADN (180 aa)) form a necessary and sufficient to mediate interaction with CANX region.

Interacts with proteins essential or regulating the formation of functional clathrin-coated pits. Interacts with CANX. Interacts with AP2A1. Interacts with EPS15. Interacts with SH3GL3. Interacts with AMPH. Interacts with ITSN1 (via SH3 domains). Interacts with and REPS1. Detected in brain, spinal cord and cerebellum.

It localises to the membrane. The protein localises to the clathrin-coated pit. Its function is as follows. May function in clathrin-mediated endocytosis. Has both a membrane binding/tubulating activity and the ability to recruit proteins essential to the formation of functional clathrin-coated pits. Has a preference for membranes enriched in phosphatidylserine and phosphoinositides and is required for the endocytosis of the transferrin receptor. May also bind tubulin. May play a role in the regulation of energy homeostasis. In Mus musculus (Mouse), this protein is SH3-containing GRB2-like protein 3-interacting protein 1 (Sgip1).